An 808-amino-acid polypeptide reads, in one-letter code: Auxin response factor 4 (808 aa).

Over residues 1–13 (MPPAAMAPPPPPQ) the composition is skewed to pro residues. The tract at residues 1–20 (MPPAAMAPPPPPQGSSTGDP) is disordered. Positions 129 to 231 (FCKTLTASDT…ELRVGVRRAM (103 aa)) form a DNA-binding region, TF-B3. The span at 342–352 (PSTIPRPDRVS) shows a compositional bias: basic and acidic residues. Disordered regions lie at residues 342–433 (PSTI…DSDV), 661–691 (TAGTATENEKSGQQAQQSSKDVQSKTQVAST), and 778–808 (QKMNSKSNAPRKDDSSENEKGHLPMPNKSDN). Residues 402-432 (AQAQRSQNSTVLQGQEQMTLRSNLTESNDSD) show a composition bias toward polar residues. The region spanning 692–785 (RSCTKVHKQG…EVQKMNSKSN (94 aa)) is the PB1 domain. Residues 787–799 (PRKDDSSENEKGH) show a composition bias toward basic and acidic residues.

It belongs to the ARF family. Homodimers and heterodimers. In terms of tissue distribution, expressed in roots, culms, leaves and young panicles.

Its subcellular location is the nucleus. In terms of biological role, auxin response factors (ARFs) are transcriptional factors that bind specifically to the DNA sequence 5'-TGTCTC-3' found in the auxin-responsive promoter elements (AuxREs). This Oryza sativa subsp. japonica (Rice) protein is Auxin response factor 4 (ARF4).